The following is a 145-amino-acid chain: QFDKETMILHHDKHHATYVANANAALEKHPEIGENLEELLADVSAIPEDIRQALVNNGGGHLNHALFWELLSPEKTEVTSDVASAIDEAFGSFESFKDAFTTAATSRFGSGWAWLVVNKEGKLEVMSTANQDTPISEGKQPILGL.

2 residues coordinate Fe(3+): His10 and His64. Positions 10 and 64 each coordinate Mn(2+).

It belongs to the iron/manganese superoxide dismutase family. Mn(2+) is required as a cofactor. The cofactor is Fe(3+).

The catalysed reaction is 2 superoxide + 2 H(+) = H2O2 + O2. In terms of biological role, destroys superoxide anion radicals which are normally produced within the cells and which are toxic to biological systems. Catalyzes the dismutation of superoxide anion radicals into O2 and H2O2 by successive reduction and oxidation of the transition metal ion at the active site. The protein is Superoxide dismutase [Mn/Fe] (sodA) of Streptococcus porcinus.